Here is a 601-residue protein sequence, read N- to C-terminus: Oligoendopeptidase F homolog (601 aa).

His-387 is a Zn(2+) binding site. The active site involves Glu-388. Zn(2+)-binding residues include His-391 and His-394.

The protein belongs to the peptidase M3 family. Zn(2+) is required as a cofactor.

Functionally, hydrolyzes peptides containing between 7 and 17 amino acids with a rather wide specificity. This Lactococcus lactis subsp. lactis (strain IL1403) (Streptococcus lactis) protein is Oligoendopeptidase F homolog (pepF).